Here is a 343-residue protein sequence, read N- to C-terminus: MAIKLAINGFGRIGRNIVRALYESGLSNEIKIVAINELADPEAIAHLLKYDTSHGRFFFPVKLGEDTISVAGDAIALFCEPNPAELPWKTLGVDVVLECTGVYHSREHAQLHLTAGAKKVLFSHPADNDVDATIVYGINDDELKPEHTIVSNGSCTTNCVVPVIKVLDDAFGIESGAITTIHASMNDQPVIDAYHHDLRRTRAASQSIIPVDTKLARGIDRILPKFKGRFEAIAVRVPTINVTAMDLSVTVNTDVDLNAVNNALKAQAKDRLEGILSYTAEPLVSIDFNHDPHSCIIDGTQTRVSHKRLIKLLVWCDNEWGFANRMLDTARAMVALEKITNIK.

Residue 12–13 (RI) coordinates NAD(+). Substrate is bound by residues 154–156 (SCT), R200, 213–214 (TK), and R236. C155 serves as the catalytic Nucleophile. N318 lines the NAD(+) pocket.

Belongs to the glyceraldehyde-3-phosphate dehydrogenase family. Epd subfamily. As to quaternary structure, homotetramer.

Its subcellular location is the cytoplasm. The catalysed reaction is D-erythrose 4-phosphate + NAD(+) + H2O = 4-phospho-D-erythronate + NADH + 2 H(+). It functions in the pathway cofactor biosynthesis; pyridoxine 5'-phosphate biosynthesis; pyridoxine 5'-phosphate from D-erythrose 4-phosphate: step 1/5. Its function is as follows. Catalyzes the NAD-dependent conversion of D-erythrose 4-phosphate to 4-phosphoerythronate. The polypeptide is D-erythrose-4-phosphate dehydrogenase (Pseudoalteromonas translucida (strain TAC 125)).